A 333-amino-acid polypeptide reads, in one-letter code: Homeobox protein Hox-A1 (333 aa).

The tract at residues 61 to 82 (ITSPHHHHHHHHHPQPATYQTS) is disordered. Over residues 64 to 74 (PHHHHHHHHHP) the composition is skewed to basic residues. Positions 74–202 (PQPATYQTSG…PASETSSPAQ (129 aa)) are interaction with OGT. Residue Thr152 is glycosylated (O-linked (GlcNAc) threonine). The Antp-type hexapeptide motif lies at 203–208 (TFDWMK). Positions 227-286 (QPNAVRTNFTTKQLTELEKEFHFNKYLTRARSEIAASLQLNETQVKIWFQNRRMKQKKRE) form a DNA-binding region, homeobox. The tract at residues 279–333 (RMKQKKREKEGLLPMSPATPPGSDEKTEESSEKSSSSPSAPSPASSTSDTLTTSH) is disordered. The segment covering 301–310 (SDEKTEESSE) has biased composition (basic and acidic residues). Residues 311–333 (KSSSSPSAPSPASSTSDTLTTSH) show a composition bias toward low complexity.

The protein belongs to the Antp homeobox family. Labial subfamily. Interacts with OGT (via TPR repeats domain); the interaction takes place mainly in the nucleus. Forms a DNA-binding heterodimer with transcription factor PBX1. Post-translationally, glycosylated by OGT.

It localises to the nucleus. Functionally, sequence-specific transcription factor. Regulates multiple developmental processes including brainstem, inner and outer ear, abducens nerve and cardiovascular development and morphogenesis as well as cognition and behavior. Also part of a developmental regulatory system that provides cells with specific positional identities on the anterior-posterior axis. Acts on the anterior body structures. Seems to act in the maintenance and/or generation of hindbrain segments. Activates transcription in the presence of PBX1A and PKNOX1. The chain is Homeobox protein Hox-A1 (Hoxa1) from Rattus norvegicus (Rat).